Consider the following 490-residue polypeptide: Aspartyl/glutamyl-tRNA(Asn/Gln) amidotransferase subunit B (490 aa).

Belongs to the GatB/GatE family. GatB subfamily. Heterotrimer of A, B and C subunits.

The catalysed reaction is L-glutamyl-tRNA(Gln) + L-glutamine + ATP + H2O = L-glutaminyl-tRNA(Gln) + L-glutamate + ADP + phosphate + H(+). The enzyme catalyses L-aspartyl-tRNA(Asn) + L-glutamine + ATP + H2O = L-asparaginyl-tRNA(Asn) + L-glutamate + ADP + phosphate + 2 H(+). Its function is as follows. Allows the formation of correctly charged Asn-tRNA(Asn) or Gln-tRNA(Gln) through the transamidation of misacylated Asp-tRNA(Asn) or Glu-tRNA(Gln) in organisms which lack either or both of asparaginyl-tRNA or glutaminyl-tRNA synthetases. The reaction takes place in the presence of glutamine and ATP through an activated phospho-Asp-tRNA(Asn) or phospho-Glu-tRNA(Gln). In Prochlorococcus marinus (strain MIT 9312), this protein is Aspartyl/glutamyl-tRNA(Asn/Gln) amidotransferase subunit B.